Reading from the N-terminus, the 235-residue chain is MESPIEKKPIIVAIDGPAASGKSTTAKILAARLGYTYIDTGAMYRSVTLKVLREGLLDEIRKDETRIAELLQTITIGFQGQRVFLDGEDVSEAIRENRVSREVSFISSLKPVRDKLRELQQEMGRKRGIVMDGRDIGTVIFPDAELKIFLIADPAERAKRRHAELLLKAGGAAVPSVEALEEEIKQRDRDDEQRTHAPLKRHPDAVLLDTSNMTIDEQVNVVYDLVNKIVEQQSL.

16–24 (GPAASGKST) is a binding site for ATP.

It belongs to the cytidylate kinase family. Type 1 subfamily.

Its subcellular location is the cytoplasm. It carries out the reaction CMP + ATP = CDP + ADP. The catalysed reaction is dCMP + ATP = dCDP + ADP. This chain is Cytidylate kinase, found in Chlorobaculum tepidum (strain ATCC 49652 / DSM 12025 / NBRC 103806 / TLS) (Chlorobium tepidum).